A 474-amino-acid chain; its full sequence is Chromosomal replication initiator protein DnaA (474 aa).

The segment at 1–90 is domain I, interacts with DnaA modulators; it reads MSSSLWLQCL…RQVVVPSSQI (90 aa). Positions 91–137 are domain II; that stretch reads IAPAAPAVTLAPRPLPATRILQDDAPSRSWEPAPSPVQPESKSGYRS. A disordered region spans residues 112–137; sequence QDDAPSRSWEPAPSPVQPESKSGYRS. The span at 128–137 shows a compositional bias: polar residues; it reads QPESKSGYRS. Residues 138-354 form a domain III, AAA+ region region; it reads NVNPKHNFNN…GALNRVIANA (217 aa). Positions 182, 184, 185, and 186 each coordinate ATP. Residues 355-474 form a domain IV, binds dsDNA region; it reads NFTGRAITID…YSNLIRTLST (120 aa).

Belongs to the DnaA family. In terms of assembly, oligomerizes as a right-handed, spiral filament on DNA at oriC.

The protein resides in the cytoplasm. Its function is as follows. Plays an essential role in the initiation and regulation of chromosomal replication. ATP-DnaA binds to the origin of replication (oriC) to initiate formation of the DNA replication initiation complex once per cell cycle. Binds the DnaA box (a 9 base pair repeat at the origin) and separates the double-stranded (ds)DNA. Forms a right-handed helical filament on oriC DNA; dsDNA binds to the exterior of the filament while single-stranded (ss)DNA is stabiized in the filament's interior. The ATP-DnaA-oriC complex binds and stabilizes one strand of the AT-rich DNA unwinding element (DUE), permitting loading of DNA polymerase. After initiation quickly degrades to an ADP-DnaA complex that is not apt for DNA replication. Binds acidic phospholipids. The chain is Chromosomal replication initiator protein DnaA from Photobacterium profundum (strain SS9).